Reading from the N-terminus, the 509-residue chain is Glycerol kinase (509 aa).

Position 17 (threonine 17) interacts with ADP. Residues threonine 17, threonine 18, and serine 19 each contribute to the ATP site. Threonine 17 serves as a coordination point for sn-glycerol 3-phosphate. Arginine 21 contacts ADP. Sn-glycerol 3-phosphate-binding residues include arginine 87, glutamate 88, tyrosine 139, and aspartate 256. Residues arginine 87, glutamate 88, tyrosine 139, aspartate 256, and glutamine 257 each coordinate glycerol. ADP contacts are provided by threonine 278 and glycine 322. Residues threonine 278, glycine 322, glutamine 326, and alanine 423 each coordinate ATP. ADP is bound by residues alanine 423 and asparagine 427.

Belongs to the FGGY kinase family.

The enzyme catalyses glycerol + ATP = sn-glycerol 3-phosphate + ADP + H(+). It functions in the pathway polyol metabolism; glycerol degradation via glycerol kinase pathway; sn-glycerol 3-phosphate from glycerol: step 1/1. Inhibited by fructose 1,6-bisphosphate (FBP). In terms of biological role, key enzyme in the regulation of glycerol uptake and metabolism. Catalyzes the phosphorylation of glycerol to yield sn-glycerol 3-phosphate. The chain is Glycerol kinase from Corynebacterium glutamicum (strain R).